The following is a 163-amino-acid chain: Iron-sulfur cluster assembly protein 2 (163 aa).

A mitochondrion-targeting transit peptide spans 1 to 48 (MMMLRQTSRKAYLGLQASPLGLGRRLYHENVIDHFENPRNVGSFNRND).

This sequence belongs to the NifU family. Component of the core Fe-S cluster (ISC) assembly machinery. The cofactor is [2Fe-2S] cluster. In terms of tissue distribution, mostly expressed in leaves, pollen and flowers.

It localises to the mitochondrion matrix. The protein operates within cofactor biosynthesis; iron-sulfur cluster biosynthesis. In terms of biological role, scaffold protein for the de novo synthesis of iron-sulfur (Fe-S) clusters within mitochondria, which is required for maturation of both mitochondrial and cytoplasmic [2Fe-2S] and [4Fe-4S] proteins. First, a [2Fe-2S] cluster is transiently assembled on the scaffold protein ISCU (ISU1, ISU2 or ISU3). In a second step, the cluster is released from ISCU, transferred to a glutaredoxin, followed by the formation of mitochondrial [2Fe-2S] proteins, the synthesis of [4Fe-4S] clusters and their target-specific insertion into the recipient apoproteins. Cluster assembly on ISCU depends on the function of the cysteine desulfurase complex NFS1-ISD11, which serves as the sulfur donor for cluster synthesis, the iron-binding protein frataxin as the putative iron donor, and the electron transfer chain comprised of ferredoxin reductase and ferredoxin, which receive their electrons from NADH. This Arabidopsis thaliana (Mouse-ear cress) protein is Iron-sulfur cluster assembly protein 2 (ISU2).